A 174-amino-acid polypeptide reads, in one-letter code: MDKVLNREESLQLMDLLGLERSAWGNIPLMRKAYLKKCKEFHPDKGGDEEKMKKMNTLYKKMEDGVKYAHQPDFGGFWDATEVFASSLNPGVDAMYCKQWPECAKKMSANCICLLCLLRMKHENRKLYRKDPLVWVDCYCFDCFRMWFGLDLCEGTLLLWCDIIGQTTYRDLKL.

At M1 the chain carries N-acetylmethionine; by host. Residues 12–75 enclose the J domain; that stretch reads QLMDLLGLER…VKYAHQPDFG (64 aa). Residues 103 to 116 form a C4-type; atypical zinc finger; the sequence is CAKKMSANCICLLC. The H1C3-type; atypical zinc-finger motif lies at 122 to 143; the sequence is HENRKLYRKDPLVWVDCYCFDC.

In terms of assembly, interacts with host PPP2R1A; the interaction inhibits PP2A activity.

The protein resides in the host cytoplasm. The protein localises to the host nucleus. Promotes efficient viral genome replication by accelerating both G1 and S phase progression of the cell cycle. Inhibits host PP2A by binding to the A subunit, thereby displacing lower affinity regulatory B subunit. Inactivation of PP2A in turn results in the transactivation of cyclin A and cyclin D1 promoters. Late during the infection cycle, ST may induce dephosphorylation of host eIF4E-binding protein EIF4EBP1 leading to the inhibition of cap-dependent translation. May establish and maintain high levels of viral genomes during persistent infection in cell culture. This Simian virus 40 (SV40) protein is Small t antigen.